The chain runs to 103 residues: Urease subunit gamma (103 aa).

It belongs to the urease gamma subunit family. In terms of assembly, heterotrimer of UreA (gamma), UreB (beta) and UreC (alpha) subunits. Three heterotrimers associate to form the active enzyme.

The protein resides in the cytoplasm. It catalyses the reaction urea + 2 H2O + H(+) = hydrogencarbonate + 2 NH4(+). Its pathway is nitrogen metabolism; urea degradation; CO(2) and NH(3) from urea (urease route): step 1/1. The chain is Urease subunit gamma from Paracoccus denitrificans (strain Pd 1222).